We begin with the raw amino-acid sequence, 153 residues long: Histone H2B type W-T (153 aa).

Residues 1–54 form a disordered region; it reads MATASAMAGPSSETTSEEQLITQEPKEANSTTSQKQSKQRKRGRHGPRRCHSNC. Positions 11-36 are enriched in polar residues; sequence SSETTSEEQLITQEPKEANSTTSQKQ. Positions 37–52 are enriched in basic residues; that stretch reads SKQRKRGRHGPRRCHS.

The protein belongs to the histone H2B family. As to quaternary structure, can replace the conventional histone H2B in the nucleosome. The nucleosome is a histone octamer containing two molecules each of H2A, H2B, H3 and H4 assembled in one H3-H4 heterotetramer and two H2A-H2B heterodimers. The octamer wraps approximately 147 bp of DNA. Testis-specific (at protein level).

It localises to the nucleus membrane. It is found in the chromosome. The protein resides in the telomere. Functionally, atypical histone H2B that can form nucleosomes structurally and dynamically indistinguishable from those containing conventional H2B. Nucleosomes wrap and compact DNA into chromatin, limiting DNA accessibility to the cellular machineries which require DNA as a template. Histones thereby play a central role in transcription regulation, DNA repair, DNA replication and chromosomal stability. DNA accessibility is regulated via a complex set of post-translational modifications of histones, also called histone code, and nucleosome remodeling. However, unlike conventional H2B, does not recruit chromosome condensation factors and does not participate in the assembly of mitotic chromosomes. May be important for telomere function and play a role in spermatogenesis. This is Histone H2B type W-T from Homo sapiens (Human).